The primary structure comprises 390 residues: Formate-dependent phosphoribosylglycinamide formyltransferase (390 aa).

N(1)-(5-phospho-beta-D-ribosyl)glycinamide is bound by residues 18-19 (EL) and E78. ATP contacts are provided by residues R110, K151, 156–161 (SSGKGQ), 191–194 (EEFL), and E199. The 191-residue stretch at 115-305 (DLASKELNIK…EFELHLRAFL (191 aa)) folds into the ATP-grasp domain. Mg(2+) contacts are provided by E264 and E276. N(1)-(5-phospho-beta-D-ribosyl)glycinamide is bound by residues D283, K353, and 360-361 (RR).

The protein belongs to the PurK/PurT family. As to quaternary structure, homodimer.

It catalyses the reaction N(1)-(5-phospho-beta-D-ribosyl)glycinamide + formate + ATP = N(2)-formyl-N(1)-(5-phospho-beta-D-ribosyl)glycinamide + ADP + phosphate + H(+). It functions in the pathway purine metabolism; IMP biosynthesis via de novo pathway; N(2)-formyl-N(1)-(5-phospho-D-ribosyl)glycinamide from N(1)-(5-phospho-D-ribosyl)glycinamide (formate route): step 1/1. Its function is as follows. Involved in the de novo purine biosynthesis. Catalyzes the transfer of formate to 5-phospho-ribosyl-glycinamide (GAR), producing 5-phospho-ribosyl-N-formylglycinamide (FGAR). Formate is provided by PurU via hydrolysis of 10-formyl-tetrahydrofolate. The polypeptide is Formate-dependent phosphoribosylglycinamide formyltransferase (Prochlorococcus marinus subsp. pastoris (strain CCMP1986 / NIES-2087 / MED4)).